The primary structure comprises 432 residues: Glutamate-gated chloride channel subunit beta (432 aa).

Residues 1–18 form the signal peptide; the sequence is MSQYMMVAVAAVVAVAGS. At 19–249 the chain is on the extracellular side; the sequence is SQISRRSTGG…MQLTLKRQFS (231 aa). N-linked (GlcNAc...) asparagine glycosylation occurs at asparagine 52. L-glutamate-binding residues include arginine 69, arginine 88, and serine 155. An intrachain disulfide couples cysteine 164 to cysteine 178. Residue serine 184 coordinates L-glutamate. Asparagine 219 is a glycosylation site (N-linked (GlcNAc...) asparagine). A disulfide bridge connects residues cysteine 226 and cysteine 237. A helical membrane pass occupies residues 250–272; sequence YYLVQLYGPTTMIVIVSWVSFWI. The Cytoplasmic portion of the chain corresponds to 273–277; the sequence is DMHST. Residues 278-299 traverse the membrane as a helical segment; the sequence is AGRVALGVTTLLTMTTMQAAIN. Topologically, residues 300-306 are extracellular; the sequence is AKLPPVS. A helical membrane pass occupies residues 307-327; the sequence is YVKVVDVWLGACQTFVFGALL. The Cytoplasmic portion of the chain corresponds to 328-402; the sequence is EYAFVSYQDS…KPDYLPAKID (75 aa). A helical membrane pass occupies residues 403-426; the sequence is YYARFCVPLGFLAFNAIYWTSCLV. The Extracellular segment spans residues 427–432; sequence MVSRLV.

It belongs to the ligand-gated ion channel (TC 1.A.9) family. Glutamate-gated chloride channel (TC 1.A.9.4) subfamily. In terms of assembly, pentamer. Expressed in motor neuron commissures at the anterior portion of the worms.

It is found in the postsynaptic cell membrane. The protein resides in the cell membrane. Glutamate-gated chloride channel subunit; channel properties may be modulated by the formation of heteromeric channels. Glutamate binding triggers a rapidly reversible current, while the anti-helmintic drug ivermectin triggers a permanently open channel configuration. The polypeptide is Glutamate-gated chloride channel subunit beta (Haemonchus contortus (Barber pole worm)).